A 1058-amino-acid chain; its full sequence is Isoleucine--tRNA ligase (1058 aa).

Positions Pro48–Thr58 match the 'HIGH' region motif. Positions Lys596 to Ser600 match the 'KMSKS' region motif. Position 599 (Lys599) interacts with ATP.

The protein belongs to the class-I aminoacyl-tRNA synthetase family. IleS type 2 subfamily. In terms of assembly, monomer. Requires Zn(2+) as cofactor.

Its subcellular location is the cytoplasm. The enzyme catalyses tRNA(Ile) + L-isoleucine + ATP = L-isoleucyl-tRNA(Ile) + AMP + diphosphate. Catalyzes the attachment of isoleucine to tRNA(Ile). As IleRS can inadvertently accommodate and process structurally similar amino acids such as valine, to avoid such errors it has two additional distinct tRNA(Ile)-dependent editing activities. One activity is designated as 'pretransfer' editing and involves the hydrolysis of activated Val-AMP. The other activity is designated 'posttransfer' editing and involves deacylation of mischarged Val-tRNA(Ile). The protein is Isoleucine--tRNA ligase of Methanosarcina barkeri (strain Fusaro / DSM 804).